The primary structure comprises 440 residues: Argininosuccinate lyase (440 aa).

It belongs to the lyase 1 family. Argininosuccinate lyase subfamily.

The protein localises to the cytoplasm. The enzyme catalyses 2-(N(omega)-L-arginino)succinate = fumarate + L-arginine. It functions in the pathway amino-acid biosynthesis; L-arginine biosynthesis; L-arginine from L-ornithine and carbamoyl phosphate: step 3/3. In Clostridium botulinum (strain Kyoto / Type A2), this protein is Argininosuccinate lyase.